The sequence spans 992 residues: MARGGAACKSDARLLLGRDALRPAPALLAPAVLLGAALGLGLGLWLGCRAGRQRTRHQKDDTQNLLKNLESNAQTPSETGSPSRRRKREVQMSKDKEAVDECEPPSNSNITAFALKAKVIYPINQKFRPLADGSSNPSLHENLKQAVLPHQPVEASPSSSLGSLSQGEKDDCSSSSSVHSATSDDRFLSRTFLRVNAFPEVLACESVDVDLCIYSLHLKDLLHLDTALRQEKHMMFIQIFKMCLLDLLPKKKSDDELYQKILSKQEKDLEELEKGLQVKLSNTEMSGAGDSEYITLADVEKKEREYSEQLIDNMEAFWKQMANIQHFLVDQFKCSSSKARQLMMTLTERMIAAEGLLCDSQELQALDALERTMGRAHMAKVIEFLKLQVQEETRCRLAAISHGLELLAGEGKLSGRQKEELLTQQHKAFWQEAERFSREFVQRGKDLVTASLAHQVEGTAKLTLAQEEEQRSFLAEAQPTADPEKFLEAFHEVLERQRLMQCDLEEEENVRATEAVVALCQELYFSTVDTFQKFVDALFLQTLPGMTGLPPEECDYLRQEVQENAAWQLGKSNRFRRQQWKLFQELLEQDQQVWMEECALSSVLQTHLREDHEGTIRGVLGRLGGLTEESTRCVLQGHDLLLRSALRRLALRGNALATLTQMRLSGKKHLLQELREQRALEQGSSQCLDEHQWQLLRALEARVLEEASRLEEEAQQTRLQLQQRLLAEAQEVGQLLQQHMECAIGQALLVHARNAATKSRAKDRDDFKRTLMEAAVESVYVTSAGVSRLVQAYYQQIGRIMEDHEERKLQHLKTLQGERMENYKLRKKQELSNPSSGSRTAGGAHETSQAVHQRMLSQQKRFLAQFPVHQQMRLHAQQQQAGVMDLLEAQLETQLQEAEQNFISELAALARVPLAESKLLPAKRGLLEKPLRTKRKKPLPQERGDLGVPNNEDLASGDQTSGSLSSKRLSQQESEAGDSGNSKKMLKRRSNL.

At methionine 1–proline 25 the chain is on the extracellular side. The helical transmembrane segment at alanine 26–cysteine 48 threads the bilayer. Over arginine 49–leucine 992 the chain is Cytoplasmic. Polar residues predominate over residues leucine 66–proline 82. 4 disordered regions span residues leucine 66–proline 105, glutamine 151–alanine 181, leucine 825–arginine 854, and proline 930–leucine 992. Residues glutamate 89–valine 99 show a composition bias toward basic and acidic residues. The segment covering serine 156 to glutamine 166 has biased composition (low complexity). Over residues glycine 957–serine 982 the composition is skewed to polar residues.

In terms of assembly, component of the EvC complex composed of EFCAB7, IQCE, EVC2 and EVC; built from two subcomplexes, EVC2:EVC and EFCAB7:IQCE. Interacts with EVC2. Interacts with EFCAB7. Interacts with IQCE. Found in the developing vertebral bodies, ribs, upper and lower limbs, heart, kidney, lung.

It is found in the cell membrane. Its subcellular location is the cytoplasm. The protein resides in the cytoskeleton. The protein localises to the cilium basal body. It localises to the cell projection. It is found in the cilium. Its subcellular location is the cilium membrane. Its function is as follows. Component of the EvC complex that positively regulates ciliary Hedgehog (Hh) signaling. Involved in endochondral growth and skeletal development. In Homo sapiens (Human), this protein is EvC complex member EVC (EVC).